The primary structure comprises 198 residues: Ribonuclease HII (198 aa).

Positions 14-198 constitute an RNase H type-2 domain; sequence GVIAGVDEVG…RNFAPISRAL (185 aa). A divalent metal cation is bound by residues aspartate 20, glutamate 21, and aspartate 112.

Belongs to the RNase HII family. Mn(2+) is required as a cofactor. It depends on Mg(2+) as a cofactor.

The protein resides in the cytoplasm. The catalysed reaction is Endonucleolytic cleavage to 5'-phosphomonoester.. Endonuclease that specifically degrades the RNA of RNA-DNA hybrids. In Wolbachia sp. subsp. Drosophila simulans (strain wRi), this protein is Ribonuclease HII.